The sequence spans 267 residues: 4-hydroxy-tetrahydrodipicolinate reductase (267 aa).

NAD(+) is bound by residues 9-14 and aspartate 35; that span reads GASGRM. Arginine 36 is an NADP(+) binding site. NAD(+) is bound by residues 98 to 100 and 122 to 125; these read GTT and ASNF. The active-site Proton donor/acceptor is the histidine 155. Histidine 156 lines the (S)-2,3,4,5-tetrahydrodipicolinate pocket. Lysine 159 serves as the catalytic Proton donor. A (S)-2,3,4,5-tetrahydrodipicolinate-binding site is contributed by 165 to 166; the sequence is GT.

This sequence belongs to the DapB family.

Its subcellular location is the cytoplasm. The catalysed reaction is (S)-2,3,4,5-tetrahydrodipicolinate + NAD(+) + H2O = (2S,4S)-4-hydroxy-2,3,4,5-tetrahydrodipicolinate + NADH + H(+). The enzyme catalyses (S)-2,3,4,5-tetrahydrodipicolinate + NADP(+) + H2O = (2S,4S)-4-hydroxy-2,3,4,5-tetrahydrodipicolinate + NADPH + H(+). Its pathway is amino-acid biosynthesis; L-lysine biosynthesis via DAP pathway; (S)-tetrahydrodipicolinate from L-aspartate: step 4/4. Its function is as follows. Catalyzes the conversion of 4-hydroxy-tetrahydrodipicolinate (HTPA) to tetrahydrodipicolinate. This chain is 4-hydroxy-tetrahydrodipicolinate reductase, found in Chromobacterium violaceum (strain ATCC 12472 / DSM 30191 / JCM 1249 / CCUG 213 / NBRC 12614 / NCIMB 9131 / NCTC 9757 / MK).